The chain runs to 93 residues: Aspartyl/glutamyl-tRNA(Asn/Gln) amidotransferase subunit C (93 aa).

This sequence belongs to the GatC family. As to quaternary structure, heterotrimer of A, B and C subunits.

It carries out the reaction L-glutamyl-tRNA(Gln) + L-glutamine + ATP + H2O = L-glutaminyl-tRNA(Gln) + L-glutamate + ADP + phosphate + H(+). The enzyme catalyses L-aspartyl-tRNA(Asn) + L-glutamine + ATP + H2O = L-asparaginyl-tRNA(Asn) + L-glutamate + ADP + phosphate + 2 H(+). Allows the formation of correctly charged Asn-tRNA(Asn) or Gln-tRNA(Gln) through the transamidation of misacylated Asp-tRNA(Asn) or Glu-tRNA(Gln) in organisms which lack either or both of asparaginyl-tRNA or glutaminyl-tRNA synthetases. The reaction takes place in the presence of glutamine and ATP through an activated phospho-Asp-tRNA(Asn) or phospho-Glu-tRNA(Gln). In Nautilia profundicola (strain ATCC BAA-1463 / DSM 18972 / AmH), this protein is Aspartyl/glutamyl-tRNA(Asn/Gln) amidotransferase subunit C.